A 146-amino-acid chain; its full sequence is Hemoglobin subunit beta-2 (146 aa).

The 145-residue stretch at 2–146 (EWTDFERATI…VVSALGRQYH (145 aa)) folds into the Globin domain. Heme b-binding residues include His63 and His92.

It belongs to the globin family. In terms of assembly, hb3 is a heterotetramer of two alpha-2 chains and two beta-2 chains. In terms of tissue distribution, red blood cells.

Involved in oxygen transport from gills to the various peripheral tissues. This chain is Hemoglobin subunit beta-2 (hbb2), found in Anarhichas minor (Arctic spotted wolffish).